Consider the following 245-residue polypeptide: ATP synthase subunit a, chloroplastic (245 aa).

The next 5 membrane-spanning stretches (helical) occupy residues 34–54 (TLMT…LSNL), 93–113 (VPFL…GALL), 132–152 (INTT…AGIS), 197–217 (LVIA…LMLL), and 218–238 (GLFT…AYIG).

It belongs to the ATPase A chain family. As to quaternary structure, F-type ATPases have 2 components, CF(1) - the catalytic core - and CF(0) - the membrane proton channel. CF(1) has five subunits: alpha(3), beta(3), gamma(1), delta(1), epsilon(1). CF(0) has four main subunits: a, b, b' and c.

It localises to the plastid. It is found in the chloroplast thylakoid membrane. Its function is as follows. Key component of the proton channel; it plays a direct role in the translocation of protons across the membrane. The chain is ATP synthase subunit a, chloroplastic from Bigelowiella natans (Pedinomonas minutissima).